The primary structure comprises 558 residues: Podocalyxin (558 aa).

Positions 1–22 (MRCALALSALLLLLSTPPLLPS) are cleaved as a signal peptide. The segment covering 20 to 29 (LPSSPSPSPS) has biased composition (pro residues). 3 disordered regions span residues 20–50 (LPSS…PTPA), 83–210 (LGVS…DHLM), and 270–338 (SVIS…VAHE). The Extracellular segment spans residues 23-461 (SPSPSPSPSQ…EEAEDRFSMP (439 aa)). Polar residues-rich tracts occupy residues 32–50 (QNAT…PTPA) and 83–107 (LGVS…NTTV). N-linked (GlcNAc...) asparagine glycosylation is found at Asn-33, Asn-43, and Asn-104. Positions 125–142 (STKSADTTTVATSTATAK) are enriched in low complexity. 3 stretches are compositionally biased toward polar residues: residues 143 to 173 (PNTT…LTST), 190 to 204 (RQPT…PTSS), and 270 to 302 (SVIS…TSPA). Asn-144 carries an N-linked (GlcNAc...) asparagine glycan. Residues 313–324 (TMSSSPTAASTT) are compositionally biased toward low complexity. A glycan (N-linked (GlcNAc...) asparagine) is linked at Asn-360. Residues 462 to 482 (LIITIVCMASFLLLVAALYGC) form a helical membrane-spanning segment. Topologically, residues 483–558 (CHQRLSQRKD…DLDEEEDTHL (76 aa)) are cytoplasmic. Position 518 is a phosphothreonine (Thr-518). Residues Ser-529 and Ser-537 each carry the phosphoserine modification. Thr-556 is modified (phosphothreonine).

The protein belongs to the podocalyxin family. As to quaternary structure, monomer; when associated with the membrane raft. Oligomer; when integrated in the apical membrane. Interacts (via the C-terminal PDZ-binding motif DTHL) with NHERF1 (via the PDZ domains); the interaction is not detected in glomerular epithelium cells, take place early in the secretory pathway and is necessary for its apical membrane sorting. Found in a complex with EZR, PODXL and NHERF2. Associates with the actin cytoskeleton through complex formation with EZR and NHERF2. Interacts (via the C-terminal PDZ-binding motif DTHL) with NHERF2 (via the PDZ 1 domain); interaction is detected in glomerular epithelium cells. Interacts with EZR. N- and O-linked glycosylated. Sialoglycoprotein. Glomerular epithelium cell (podocyte).

It localises to the apical cell membrane. The protein resides in the cell projection. The protein localises to the lamellipodium. It is found in the filopodium. Its subcellular location is the ruffle. It localises to the microvillus. The protein resides in the membrane raft. The protein localises to the membrane. In terms of biological role, involved in the regulation of both adhesion and cell morphology and cancer progression. Functions as an anti-adhesive molecule that maintains an open filtration pathway between neighboring foot processes in the podocyte by charge repulsion. Acts as a pro-adhesive molecule, enhancing the adherence of cells to immobilized ligands, increasing the rate of migration and cell-cell contacts in an integrin-dependent manner. Induces the formation of apical actin-dependent microvilli. Involved in the formation of a preapical plasma membrane subdomain to set up initial epithelial polarization and the apical lumen formation during renal tubulogenesis. Plays a role in cancer development and aggressiveness by inducing cell migration and invasion through its interaction with the actin-binding protein EZR. Affects EZR-dependent signaling events, leading to increased activities of the MAPK and PI3K pathways in cancer cells. In Homo sapiens (Human), this protein is Podocalyxin (PODXL).